The chain runs to 209 residues: 2-phospho-L-lactate guanylyltransferase (209 aa).

Belongs to the CofC family. Homodimer.

The enzyme catalyses (2S)-2-phospholactate + GTP + H(+) = (2S)-lactyl-2-diphospho-5'-guanosine + diphosphate. The protein operates within cofactor biosynthesis; coenzyme F420 biosynthesis. Guanylyltransferase that catalyzes the activation of (2S)-2-phospholactate (2-PL) as (2S)-lactyl-2-diphospho-5'-guanosine, via the condensation of 2-PL with GTP. It is involved in the biosynthesis of coenzyme F420, a hydride carrier cofactor. This chain is 2-phospho-L-lactate guanylyltransferase, found in Methanosphaerula palustris (strain ATCC BAA-1556 / DSM 19958 / E1-9c).